A 54-amino-acid chain; its full sequence is Anti-adapter protein SpxO (54 aa).

Interacts with SpxH.

In terms of biological role, inhibitor of Spx proteolytic control. Acts by interacting with SpxH/YjbH, which disrupts interaction between SpxH and Spx, and inhibits SpxH-enhanced proteolysis of Spx by ClpXP. Required for the stabilization of Spx and activation of Spx-regulated genes in response to cell wall stress. This is Anti-adapter protein SpxO from Bacillus subtilis (strain 168).